The following is a 193-amino-acid chain: Imidazoleglycerol-phosphate dehydratase (193 aa).

The protein belongs to the imidazoleglycerol-phosphate dehydratase family.

The protein localises to the cytoplasm. The enzyme catalyses D-erythro-1-(imidazol-4-yl)glycerol 3-phosphate = 3-(imidazol-4-yl)-2-oxopropyl phosphate + H2O. It participates in amino-acid biosynthesis; L-histidine biosynthesis; L-histidine from 5-phospho-alpha-D-ribose 1-diphosphate: step 6/9. The sequence is that of Imidazoleglycerol-phosphate dehydratase from Metallosphaera sedula (strain ATCC 51363 / DSM 5348 / JCM 9185 / NBRC 15509 / TH2).